The primary structure comprises 177 residues: Large ribosomal subunit protein uL6 (177 aa).

Residues 152–171 (RPPEPYKGKGVRYDDEEVRR) are compositionally biased toward basic and acidic residues. The disordered stretch occupies residues 152–177 (RPPEPYKGKGVRYDDEEVRRKEAKKK).

Belongs to the universal ribosomal protein uL6 family. As to quaternary structure, part of the 50S ribosomal subunit.

This protein binds to the 23S rRNA, and is important in its secondary structure. It is located near the subunit interface in the base of the L7/L12 stalk, and near the tRNA binding site of the peptidyltransferase center. This chain is Large ribosomal subunit protein uL6, found in Shewanella putrefaciens (strain CN-32 / ATCC BAA-453).